The primary structure comprises 86 residues: SEED MATURATION PROTEIN 1 (86 aa).

The interval 52–86 is disordered; the sequence is RIEKGKEQSAASGDQTQIQRDIKDIKGTRTDDSPR. Residues 60 to 70 show a composition bias toward polar residues; sequence SAASGDQTQIQ. The span at 71–86 shows a compositional bias: basic and acidic residues; sequence RDIKDIKGTRTDDSPR.

The protein belongs to the LEA type 3 family.

In terms of biological role, protein chaperone involved in seed maturation and dormancy maintenance after high temperature fluctuation (e.g. secondary dormancy after 3 days at 40 degrees Celsius), probably by protecting heat labile proteins required for secondary dormancy (e.g. G6PDH, HOP3, SR45, ECP63, SCL33, RPL32B, ChlADR1, MSBP1, MBF1B, At3g01690, At1g15280, At1g15290, At2g31410, At1g11630, At1g65090, EMB2279, EMB1674 and RPL35C). The sequence is that of SEED MATURATION PROTEIN 1 from Arabidopsis thaliana (Mouse-ear cress).